Consider the following 415-residue polypeptide: Ribulose bisphosphate carboxylase large chain (415 aa).

Substrate contacts are provided by Asn101 and Thr151. The active-site Proton acceptor is Lys153. Residue Lys155 participates in substrate binding. Positions 179, 181, and 182 each coordinate Mg(2+). Lys179 carries the N6-carboxylysine modification. His272 (proton acceptor) is an active-site residue. Residues Arg273, His305, and Ser357 each coordinate substrate.

It belongs to the RuBisCO large chain family. Type I subfamily. As to quaternary structure, heterohexadecamer of 8 large chains and 8 small chains; disulfide-linked. The disulfide link is formed within the large subunit homodimers. Mg(2+) is required as a cofactor. Post-translationally, the disulfide bond which can form in the large chain dimeric partners within the hexadecamer appears to be associated with oxidative stress and protein turnover.

Its subcellular location is the plastid. The protein localises to the chloroplast. The catalysed reaction is 2 (2R)-3-phosphoglycerate + 2 H(+) = D-ribulose 1,5-bisphosphate + CO2 + H2O. It carries out the reaction D-ribulose 1,5-bisphosphate + O2 = 2-phosphoglycolate + (2R)-3-phosphoglycerate + 2 H(+). Its function is as follows. RuBisCO catalyzes two reactions: the carboxylation of D-ribulose 1,5-bisphosphate, the primary event in carbon dioxide fixation, as well as the oxidative fragmentation of the pentose substrate in the photorespiration process. Both reactions occur simultaneously and in competition at the same active site. This chain is Ribulose bisphosphate carboxylase large chain, found in Cibotium barometz (Scythian lamb).